Consider the following 416-residue polypeptide: Trifolitoxin-processing protein TfxD (416 aa).

The next 11 membrane-spanning stretches (helical) occupy residues 24-44 (MIPNVADTIVVTLIGATALQV), 48-68 (VLITILTLNIAFLNFCSLICM), 79-99 (VFAAIVRAACMMIGVYLALIA), 114-134 (IAFIALSALRPFVAGWNAYCA), 153-173 (SSLIYAGVNLLFVGLSHFAGT), 176-196 (SIISLLIGVYLALFHNALAYA), 230-250 (ASFINMLEMGFLALVGWVVAA), 255-275 (IAVFYFPFFTLVELTSGLAIG), 295-315 (VLIAVYSTYSLLCFLIYVGLI), 322-342 (IFALPLSLAGLALLFLICDGL), and 372-392 (VILALAAVLGSVQALAIALVL).

The protein resides in the cell membrane. Functionally, the actions of the proteins TfxB, TfxD and TfxF are implicated in the processing of the inactive trifolitoxin (TfxA) precursor into the active peptide. The polypeptide is Trifolitoxin-processing protein TfxD (tfxD) (Rhizobium leguminosarum bv. trifolii).